A 122-amino-acid chain; its full sequence is Large ribosomal subunit protein uL14 (122 aa).

This sequence belongs to the universal ribosomal protein uL14 family. In terms of assembly, part of the 50S ribosomal subunit. Forms a cluster with proteins L3 and L19. In the 70S ribosome, L14 and L19 interact and together make contacts with the 16S rRNA in bridges B5 and B8.

Functionally, binds to 23S rRNA. Forms part of two intersubunit bridges in the 70S ribosome. The sequence is that of Large ribosomal subunit protein uL14 from Alkaliphilus metalliredigens (strain QYMF).